Consider the following 508-residue polypeptide: Protein disulfide-isomerase (508 aa).

The signal sequence occupies residues 1–17 (MLRRALLCLAVAALVRA). One can recognise a Thioredoxin 1 domain in the interval 18-134 (DAPEEEDHVL…IVNWLKKRTG (117 aa)). Active-site nucleophile residues include cysteine 53 and cysteine 56. A disulfide bond links cysteine 53 and cysteine 56. Lysine 200 carries the N6-acetyllysine modification. N6-succinyllysine occurs at positions 222 and 271. Serine 331 bears the Phosphoserine mark. One can recognise a Thioredoxin 2 domain in the interval 349–475 (GKIKPHLMSQ…FKKFLESGGQ (127 aa)). At serine 357 the chain carries Phosphoserine; by FAM20C. Residues cysteine 397 and cysteine 400 each act as nucleophile in the active site. Cysteine 397 and cysteine 400 are oxidised to a cystine. The residue at position 427 (serine 427) is a Phosphoserine. Residues 471–508 (ESGGQDGAGDDDDLEDLEEAEEPDMEEDDDQKAVKDEL) are disordered. Residues 478 to 500 (AGDDDDLEDLEEAEEPDMEEDDD) show a composition bias toward acidic residues. The short motif at 505-508 (KDEL) is the Prevents secretion from ER element.

The protein belongs to the protein disulfide isomerase family. As to quaternary structure, heterodimer; heterodimerizes with the protein microsomal triglyceride transfer MTTP. Homodimer. Monomers and homotetramers may also occur. Interacts with P4HA2, forming a heterotetramer consisting of 2 alpha subunits (P4HA2) and 2 beta (P4HB), where P4HB plays the role of a structural subunit; this tetramer catalyzes the formation of 4-hydroxyproline in collagen. Also constitutes the structural subunit of the microsomal triacylglycerol transfer protein MTTP in mammalian cells. Stabilizes both enzymes and retain them in the ER without contributing to the catalytic activity. Binds UBQLN1. Interacts with ERO1B. Binds to CD4, and upon HIV-1 binding to the cell membrane, is part of a P4HB/PDI-CD4-CXCR4-gp120 complex. Interacts with ILDR2. Interacts with ERN1/IRE1A (via N-terminus); the interaction is enhanced by phosphorylation of P4HB by FAM20C in response to endoplasmic reticulum stress and results in attenuation of ERN1 activity. Post-translationally, phosphorylation of Ser-357 by FAM20C is induced by endoplasmic reticulum stress and results in a functional switch from oxidoreductase to molecular chaperone. It also promotes interaction with ERN1.

The protein resides in the endoplasmic reticulum. Its subcellular location is the endoplasmic reticulum lumen. It is found in the melanosome. The protein localises to the cell membrane. The enzyme catalyses Catalyzes the rearrangement of -S-S- bonds in proteins.. In terms of biological role, this multifunctional protein catalyzes the formation, breakage and rearrangement of disulfide bonds. At the cell surface, seems to act as a reductase that cleaves disulfide bonds of proteins attached to the cell. May therefore cause structural modifications of exofacial proteins. Inside the cell, seems to form/rearrange disulfide bonds of nascent proteins. At high concentrations and following phosphorylation by FAM20C, functions as a chaperone that inhibits aggregation of misfolded proteins. At low concentrations, facilitates aggregation (anti-chaperone activity). May be involved with other chaperones in the structural modification of the TG precursor in hormone biogenesis. Also acts as a structural subunit of various enzymes such as prolyl 4-hydroxylase and microsomal triacylglycerol transfer protein MTTP. Receptor for LGALS9; the interaction retains P4HB at the cell surface of Th2 T helper cells, increasing disulfide reductase activity at the plasma membrane, altering the plasma membrane redox state and enhancing cell migration. This Homo sapiens (Human) protein is Protein disulfide-isomerase (P4HB).